The following is a 320-amino-acid chain: Short-chain dehydrogenase TIC 32 B, chloroplastic (320 aa).

NADP(+) contacts are provided by residues 40 to 46, 92 to 93, Asn-119, and Thr-140; these read GGTSGIG and DL. A substrate-binding site is contributed by Ser-174. The Proton acceptor role is filled by Tyr-196. Residues 301–317 are interaction with calmodulin; that stretch reads DTTLADKLWDFSIKLVD.

It belongs to the short-chain dehydrogenases/reductases (SDR) family. Part of the Tic complex.

It localises to the plastid. The protein localises to the chloroplast inner membrane. Involved in protein precursor import into chloroplasts. The chain is Short-chain dehydrogenase TIC 32 B, chloroplastic from Brassica napus (Rape).